The sequence spans 396 residues: OTU domain-containing protein 3 (396 aa).

The interval 1–49 (MSRKQAAKSRPGSGGRRAEAERKRDERAARRALAKERRNRPDPGGSGCE) is disordered. The segment covering 16-41 (RRAEAERKRDERAARRALAKERRNRP) has biased composition (basic and acidic residues). Residues 64–188 (LKLREVPGDG…GEHYDSVRRI (125 aa)) enclose the OTU domain. Lysine 65 is subject to N6-acetyllysine. Residues 69–75 (VPGDGNC) are cys-loop. Aspartate 72 is a catalytic residue. The active-site Nucleophile is the cysteine 75. N6-acetyllysine is present on residues lysine 121 and lysine 128. Residues 126–136 (LSKPGTFAGND) are variable-loop. Residues 176 to 181 (YRYGEH) are his-loop. Histidine 181 is an active-site residue. N6-acetyllysine is present on lysine 219. The region spanning 229 to 269 (DDVEDAVHKVGSATGCTDFNLIVQNLEAENYNIKSAITALL) is the UBA-like domain. The tract at residues 275–381 (TGNDAEENHE…RDTGRSEADM (107 aa)) is disordered. 3 stretches are compositionally biased toward basic and acidic residues: residues 280–301 (EENH…EAGS), 312–331 (NEGR…ESKA), and 343–379 (QRRE…RSEA). Position 290 is an N6-acetyllysine (lysine 290).

Post-translationally, glucose and fatty acids stimulate CREBBP-dependent acetylation, promoting its nuclear translocation.

Its subcellular location is the cytoplasm. The protein localises to the nucleus. The enzyme catalyses Thiol-dependent hydrolysis of ester, thioester, amide, peptide and isopeptide bonds formed by the C-terminal Gly of ubiquitin (a 76-residue protein attached to proteins as an intracellular targeting signal).. In terms of biological role, deubiquitinating enzyme that hydrolyzes 'Lys-6'- and 'Lys-11'-linked polyubiquitin. Also hydrolyzes heterotypic (mixed and branched) and homotypic chains. Important regulator of energy metabolism. Glucose and fatty acids trigger its nuclear translocation by CBP-dependent acetylation. In the nucleus, deubiquitinates and stabilizes the nuclear receptor PPARD regulating the expression of various genes involved in glucose and lipid metabolism and oxidative phosphorylation. Also acts as a negative regulator of the ribosome quality control (RQC) by mediating deubiquitination of 40S ribosomal proteins RPS10/eS10 and RPS20/uS10, thereby antagonizing ZNF598-mediated 40S ubiquitination. In Mus musculus (Mouse), this protein is OTU domain-containing protein 3 (Otud3).